The chain runs to 210 residues: ATP-dependent Clp protease proteolytic subunit (210 aa).

The active-site Nucleophile is the serine 106. Histidine 131 is a catalytic residue.

This sequence belongs to the peptidase S14 family. Fourteen ClpP subunits assemble into 2 heptameric rings which stack back to back to give a disk-like structure with a central cavity, resembling the structure of eukaryotic proteasomes.

The protein localises to the cytoplasm. The catalysed reaction is Hydrolysis of proteins to small peptides in the presence of ATP and magnesium. alpha-casein is the usual test substrate. In the absence of ATP, only oligopeptides shorter than five residues are hydrolyzed (such as succinyl-Leu-Tyr-|-NHMec, and Leu-Tyr-Leu-|-Tyr-Trp, in which cleavage of the -Tyr-|-Leu- and -Tyr-|-Trp bonds also occurs).. Cleaves peptides in various proteins in a process that requires ATP hydrolysis. Has a chymotrypsin-like activity. Plays a major role in the degradation of misfolded proteins. The chain is ATP-dependent Clp protease proteolytic subunit from Bartonella henselae (strain ATCC 49882 / DSM 28221 / CCUG 30454 / Houston 1) (Rochalimaea henselae).